We begin with the raw amino-acid sequence, 518 residues long: MAAAAAGAAGLMAPASAACSSGSAGAAPGSQGVLIGDRLYSGVLITLENCLLPDDKLRFTPSMSSGLDVDTETGLRVVGCELIQAAGILLRLPQVAMATGQVLFQRFFYTKSFVKHSMEHVSMACVHLASKIEEAPRRIRDVINVFHRLRHLREKKKPVPLVLDQEYVNLKNQIIKAERRVLKELGFCVHVKHPHKIIVMYLQVLECERNQHLVQTAWNYMNDSLRTDVFVRFQPESIACACIYLAARTLEIPLPNRPHWFLLFGATEEEIQEICFKILQLYTRKKVDLTHLESEVEKRKHAIEEAKARAKGLLPGTAPGLDSAAGFSPAPKLESPKEGKGGKPSPPSGKSAKRKMEGPKKAQGHSPVNGLLKGQESRSQSRSREQSYSRSPSRSASPKRRKSDSGSTSGGSKSQSRSRSRSDSPPRQVHRGAPYKGSEVRGSRKSKDCKYLTQKPHKSRSRSSSRSRSRSRERTDNSGKYKKKSHYYRDQRRERSRSYERTGHRYERDHPGHSRHRR.

Cyclin-like stretches follow at residues 81–183 (ELIQ…RVLK) and 196–280 (KIIV…KILQ). The interval 310–518 (AKGLLPGTAP…DHPGHSRHRR (209 aa)) is disordered. A phosphoserine mark is found at Ser328, Ser335, Ser345, Ser348, and Ser366. Residues 382 to 420 (RSREQSYSRSPSRSASPKRRKSDSGSTSGGSKSQSRSRS) form an RS region. A compositionally biased stretch (low complexity) spans 405 to 427 (SGSTSGGSKSQSRSRSRSDSPPR). The segment covering 438-450 (SEVRGSRKSKDCK) has biased composition (basic and acidic residues). Positions 455 to 469 (KPHKSRSRSSSRSRS) are enriched in basic residues. Composition is skewed to basic and acidic residues over residues 470–479 (RSRERTDNSG) and 487–512 (YYRD…DHPG).

Belongs to the cyclin family. Cyclin L subfamily. In terms of assembly, interacts with CDK11A, CDK11B, CDK12, CDK13 and POLR2A, the hyperphosphorylated C-terminal domain (CTD) of RNA polymerase II. May form a ternary complex with CDK11B and casein kinase II (CKII). Interacts with pre-mRNA-splicing factors, including at least SRSF1, SRSF2 and SRSF7/SLU7. Widely expressed (at protein level).

It is found in the nucleus speckle. It localises to the nucleus. The protein resides in the nucleoplasm. Involved in pre-mRNA splicing. May induce cell death, possibly by acting on the transcription and RNA processing of apoptosis-related factors. The polypeptide is Cyclin-L2 (Ccnl2) (Mus musculus (Mouse)).